The sequence spans 175 residues: Outer membrane protein assembly factor BamE (175 aa).

Residues 1–21 (MQNTKLLLTSFTFVGLLALAG) form the signal peptide. Cys-22 carries N-palmitoyl cysteine lipidation. The S-diacylglycerol cysteine moiety is linked to residue Cys-22. Disordered stretches follow at residues 117 to 147 (ALLGKDSGTNVTAPAQEAEKPKSEVPAKPGS) and 156 to 175 (IDNVETVPVPTPEPLDTSPQ).

Belongs to the BamE family. In terms of assembly, part of the Bam complex.

Its subcellular location is the cell outer membrane. Functionally, part of the outer membrane protein assembly complex, which is involved in assembly and insertion of beta-barrel proteins into the outer membrane. May have a structural role in maintaining the cell envelope integrity. This Pseudomonas fluorescens protein is Outer membrane protein assembly factor BamE.